The sequence spans 283 residues: Pantothenate synthetase (283 aa).

An ATP-binding site is contributed by 30-37; the sequence is MGALHEGH. The Proton donor role is filled by histidine 37. Position 61 (glutamine 61) interacts with (R)-pantoate. Glutamine 61 is a beta-alanine binding site. Residue 147 to 150 coordinates ATP; sequence GEKD. A (R)-pantoate-binding site is contributed by glutamine 153. Residues valine 176 and 184–187 each bind ATP; that span reads VSSR.

This sequence belongs to the pantothenate synthetase family. Homodimer.

It localises to the cytoplasm. The enzyme catalyses (R)-pantoate + beta-alanine + ATP = (R)-pantothenate + AMP + diphosphate + H(+). It functions in the pathway cofactor biosynthesis; (R)-pantothenate biosynthesis; (R)-pantothenate from (R)-pantoate and beta-alanine: step 1/1. Functionally, catalyzes the condensation of pantoate with beta-alanine in an ATP-dependent reaction via a pantoyl-adenylate intermediate. This chain is Pantothenate synthetase, found in Chlorobium limicola (strain DSM 245 / NBRC 103803 / 6330).